An 88-amino-acid polypeptide reads, in one-letter code: Small ribosomal subunit protein uS17 (88 aa).

This sequence belongs to the universal ribosomal protein uS17 family. In terms of assembly, part of the 30S ribosomal subunit.

In terms of biological role, one of the primary rRNA binding proteins, it binds specifically to the 5'-end of 16S ribosomal RNA. The chain is Small ribosomal subunit protein uS17 from Pseudomonas putida (strain ATCC 700007 / DSM 6899 / JCM 31910 / BCRC 17059 / LMG 24140 / F1).